A 141-amino-acid polypeptide reads, in one-letter code: Phage-like element PBSX protein XkdS (141 aa).

The protein to B.subtilis YqbS.

The polypeptide is Phage-like element PBSX protein XkdS (xkdS) (Bacillus subtilis (strain 168)).